The chain runs to 439 residues: 26S proteasome regulatory subunit 6A (439 aa).

Met1 carries the post-translational modification N-acetylmethionine. Ser9 bears the Phosphoserine mark. 227-234 (GPPGTGKT) contacts ATP. Ser376 carries the phosphoserine modification.

It belongs to the AAA ATPase family. Component of the 19S proteasome regulatory particle complex. The 26S proteasome consists of a 20S core particle (CP) and two 19S regulatory subunits (RP). The regulatory particle is made of a lid composed of 9 subunits, a base containing 6 ATPases including PSMC3 and few additional components. Interacts with PAAF1.

It localises to the cytoplasm. It is found in the nucleus. Component of the 26S proteasome, a multiprotein complex involved in the ATP-dependent degradation of ubiquitinated proteins. This complex plays a key role in the maintenance of protein homeostasis by removing misfolded or damaged proteins, which could impair cellular functions, and by removing proteins whose functions are no longer required. Therefore, the proteasome participates in numerous cellular processes, including cell cycle progression, apoptosis, or DNA damage repair. PSMC3 belongs to the heterohexameric ring of AAA (ATPases associated with diverse cellular activities) proteins that unfolds ubiquitinated target proteins that are concurrently translocated into a proteolytic chamber and degraded into peptides. This chain is 26S proteasome regulatory subunit 6A (Psmc3), found in Rattus norvegicus (Rat).